Reading from the N-terminus, the 677-residue chain is Mitochondrial disaggregase (677 aa).

The N-terminal 57 residues, 1-57, are a transit peptide targeting the mitochondrion; it reads MMLSAVLRRTAPAPRLFLGLIKSPSLQSRGGAYNRSVITGDRGEPQRLRTAAWVRPG. Positions 64 to 103 are disordered; it reads PGRGAATGGRRGERTEIPYLTAASSGRGPSPEETLPGQDS. Positions 92–126 are autoinhibitory; sequence PSPEETLPGQDSWNGVPNKAGLGMWALAMALVVQC. ANK repeat units lie at residues 133–162, 166–195, 235–265, and 268–297; these read NKDA…DVNA, LGWT…DPNL, KGCT…PLQR, and MGHT…EKQR. ATP is bound by residues His316, Ile318, Ser353, Gly354, Ile355, Gly356, Lys357, Thr358, Glu425, and Asn466. The interval 477 to 505 is regulatory; slows ATPase and disaggregase activities; the sequence is LQLRQEALEMSRNRIAENLGDVQISDKIT. Residue Arg531 participates in ATP binding. Lys559 carries the N6-acetyllysine modification. ATP is bound at residue Arg590.

This sequence belongs to the ClpA/ClpB family. As to quaternary structure, homododecamer when substrate-bound; the homododecamer consists of 2 homohexamers stacked head-to-head via ANK repeat-mediated interactions. The active substrate-bound form is likely to exist in a dynamic equilibrium between homohexamers and homododecamers. Homotetradecamer in the unbound state which is remodeled upon substrate binding into the homododecamer. Interacts with PHB and PHB2. Interacts with MAVS; the interaction is enhanced by Sendai virus infection. Post-translationally, proteolytically cleaved by protease PARL. ATP-dependent protein disaggregase activity is stimulated by PARL-mediated cleavage of the N-terminal autoinhibitory peptide.

It is found in the mitochondrion intermembrane space. It carries out the reaction ATP + H2O = ADP + phosphate + H(+). Disaggregase activity is inhibited by ADP. Functionally, functions as a regulatory ATPase and participates in secretion/protein trafficking process. Has ATP-dependent protein disaggregase activity and is required to maintain the solubility of key mitochondrial proteins. Involved in mitochondrial-mediated antiviral innate immunity, activates RIG-I-mediated signal transduction and production of IFNB1 and pro-inflammatory cytokine IL6. Plays a role in granulocyte differentiation. In Rattus norvegicus (Rat), this protein is Mitochondrial disaggregase.